The following is a 202-amino-acid chain: Syndecan-4 (202 aa).

An N-terminal signal peptide occupies residues 1–22; it reads MASPRLLALLLLLVGAFNAAAA. Over 23-152 the chain is Extracellular; sequence ESIRETEVIN…NIFERTEVLS (130 aa). 2 disordered regions span residues 41–75 and 87–112; these read YFSGDLPDDEDVGGPGQEPDDFEWSGSGDLEGPED and VPLDNHIPERTGPGGRVPTEPKELEE. O-linked (Xyl...) (glycosaminoglycan) serine glycosylation occurs at serine 43. Positions 46 to 63 are enriched in acidic residues; sequence LPDDEDVGGPGQEPDDFE. Serine 65 and serine 67 each carry an O-linked (Xyl...) (glycosaminoglycan) serine glycan. A helical membrane pass occupies residues 153-173; that stretch reads ALIVGGIVGILFAVFLVLLLV. The Cytoplasmic segment spans residues 174–202; that stretch reads YRMKKKDEGSYDLGKKPIYKKAPTNEFYA.

The protein belongs to the syndecan proteoglycan family. As to quaternary structure, homodimer. Interacts with CDCP1 and SDCBP. Interacts (via its cytoplasmic domain) with GIPC (via its PDZ domain). Interacts (via its cytoplasmic domain) with NUDT16L1. Interacts with DNM2; this interaction is markedly enhanced at focal ahesion site upon induction of focal adhesions and stress-fiber formation. Post-translationally, shedding, cleavage of the extracellular domain to release a soluble form, is enhanced by a number of factors such as heparanase, growth factor receptor action for example by thrombin or EGF. Physiological events such as stress or wound healing can activate the shedding. PMA-mediated shedding is inhibited by TIMP3. O-glycosylated; contains both chondroitin sulfate and heparan sulfate. Ser-43, Ser-65 and Ser-67 can all be modified by either chondroitin sulfate or heparan sulfate, and the protein exists in forms that contain only chondroitin sulfate, only heparan sulfate and both chondroitin sulfate and heparan sulfate.

The protein resides in the membrane. Its subcellular location is the secreted. In terms of biological role, cell surface proteoglycan which regulates exosome biogenesis in concert with SDCBP and PDCD6IP. The chain is Syndecan-4 from Sus scrofa (Pig).